The sequence spans 369 residues: Methionine import ATP-binding protein MetN 1 (369 aa).

The ABC transporter domain maps to 29–265 (IRLHGLGKRY…PRHAVTRSLL (237 aa)). 62-69 (GRSGAGKS) serves as a coordination point for ATP.

The protein belongs to the ABC transporter superfamily. Methionine importer (TC 3.A.1.24) family. The complex is composed of two ATP-binding proteins (MetN), two transmembrane proteins (MetI) and a solute-binding protein (MetQ).

It localises to the cell inner membrane. The enzyme catalyses L-methionine(out) + ATP + H2O = L-methionine(in) + ADP + phosphate + H(+). The catalysed reaction is D-methionine(out) + ATP + H2O = D-methionine(in) + ADP + phosphate + H(+). In terms of biological role, part of the ABC transporter complex MetNIQ involved in methionine import. Responsible for energy coupling to the transport system. The polypeptide is Methionine import ATP-binding protein MetN 1 (Pseudomonas aeruginosa (strain ATCC 15692 / DSM 22644 / CIP 104116 / JCM 14847 / LMG 12228 / 1C / PRS 101 / PAO1)).